Consider the following 217-residue polypeptide: MKFFVDSANIEEIRELQNLSLVDGVTTNPSLILKSGRNILDVIKEICTLIEGPVSAEVAATEFEIIMKEAAILAKIADNICIKLPLTLEGLKACKALAAQGLKTNLTLCFSANQALLAAKAGATFVSPFIGRLDDCGINGSELLHEIRTIYDNYGFETQILAASIRTVNHVKEAALSGADVASVPPTILKALVKHPLTDKGLQTFLDDWKKTGQNIA.

The active-site Schiff-base intermediate with substrate is Lys83.

This sequence belongs to the transaldolase family. Type 3B subfamily.

It localises to the cytoplasm. It carries out the reaction D-sedoheptulose 7-phosphate + D-glyceraldehyde 3-phosphate = D-erythrose 4-phosphate + beta-D-fructose 6-phosphate. Its pathway is carbohydrate degradation; pentose phosphate pathway; D-glyceraldehyde 3-phosphate and beta-D-fructose 6-phosphate from D-ribose 5-phosphate and D-xylulose 5-phosphate (non-oxidative stage): step 2/3. Functionally, transaldolase is important for the balance of metabolites in the pentose-phosphate pathway. The chain is Probable transaldolase from Bartonella quintana (strain Toulouse) (Rochalimaea quintana).